Reading from the N-terminus, the 315-residue chain is MFQFVTPVGTQNGLKATCAKISPDGQFLAITQGLNILIYDINRRTVSQTLVTSHARPFSELCWSPDGQCIATASDDFSVEIIHLSYGLLHTFIGHTAPVISLTFNRKGNLLFTSSMDESIKIWDTLNGSLMKTISAHSEAVVSVDVPMNDSSILSSGSYDGLIRIFDAETGHCLKTLTYDKDWKRENGVVPISQVKFSENARYLLVKSLDGVVKIWDCIGGCVVRTFQVQPLEKGVLHHSCGMDFLNPEDGSTPLVISGYENGDIYCWNSDTKSLLQLLDGSLYHHSSPVMSIHCFGNIMCSLALNGDCCLWRWV.

WD repeat units lie at residues 53 to 93, 94 to 133, 136 to 178, 187 to 228, 238 to 278, and 285 to 315; these read SHAR…HTFI, GHTAPVISLTFNRKGNLLFTSSMDESIKIWDTLNGSLMKT, AHSE…KTLT, NGVV…RTFQ, HHSC…LLQL, and HHSSPVMSIHCFGNIMCSLALNGDCCLWRWV.

As to quaternary structure, component of the Set1C/COMPASS complex which consists of SET1(2), BRE2(2), SPP1(2), SDC1(1), SHG1(1), SWD1(1), SWD2(1), and SWD3(1).

It is found in the nucleus. The protein resides in the chromosome. Its subcellular location is the telomere. Its function is as follows. The COMPASS (Set1C) complex specifically mono-, di- and trimethylates histone H3 to form H3K4me1/2/3, which subsequently plays a role in telomere length maintenance and transcription elongation regulation. COMPASS recognizes ubiquitinated H2B on one face of the nucleosome which stimulates the methylation of H3 on the opposing face. SWD3/CPS30 establishes COMPASS trimethylation activity and may also serve as the anchor point to properly tether and space the other subunits. The chain is COMPASS component SWD3 from Saccharomyces cerevisiae (strain ATCC 204508 / S288c) (Baker's yeast).